Consider the following 665-residue polypeptide: MTASNKALELQLQMKQNAEELQDFMRELESWEKDIKEVDSELRKQSGVSEENLPPIRNKTFKKKKKSKTKVPSKTTTEENKKNKIKSYDYEAWGKLDVDKILEELDKDDSTHDSVSPESDSEEDGIHIDKEKALAEKEKGNKYFKQGNFDEAIKCYTRGMHSDPFNPVLPTNRASAFYRMKKFSVAESDCNLALALDKNYTKAYARRGAARFALKNFQGAKEDYEKVLELDANNYEAKNELKKIEQALSSESSEQKEFEEAVRSELTENERRCIEEEQLKQKAVTEKDLGNGYFKEGKYEAAIECYTRGIAADGTNALLPANRAMAYLKIQKYEEAENDCTQALLLDASYSKAFARRGAARVALGKLKEAMQDFEAVLKLEPGNKQAINELTKIRNELAEKEQSCHEEYPAVLIKESEIKNIVKLTHNPLNLKSTKPLRRIAVEEVDDDVLNSDFSSSTSLVNNWKNSVNIETTENLDQDDQLTSMDIPKAKQLKIEEITDVSSPQLPAGAKGVSSVLHPSMNKQIERENKASFRSASPVPAIPANSFQLESDFRKLKDCPEKMYLYLKQIEPSIYPKLFQKSLDPDLFNQILRILHDFYIEKEEPSLILEILQRLSELKRFDMAVMFMSGSEKKITQVLFSHMKHMGLKDTSVEQLEKKYAVFS.

A TPR 1 repeat occupies 8–41 (LELQLQMKQNAEELQDFMRELESWEKDIKEVDSE). Disordered regions lie at residues 38 to 83 (VDSE…NKKN) and 107 to 127 (KDDS…DGIH). The span at 59–71 (KTFKKKKKSKTKV) shows a compositional bias: basic residues. TPR repeat units lie at residues 133–166 (ALAE…DPFN), 168–200 (VLPT…DKNY), 201–234 (TKAY…DANN), 283–316 (AVTE…DGTN), 318–350 (LLPA…DASY), and 351–384 (SKAF…EPGN).

Belongs to the RPAP3 family.

Functionally, may for an interface between the RNA polymerase II enzyme and chaperone/scaffolding protein. This chain is RNA polymerase II-associated protein 3 (RPAP3), found in Gallus gallus (Chicken).